Consider the following 242-residue polypeptide: Type III pantothenate kinase (242 aa).

Residue 5-12 (DLGNTRLK) participates in ATP binding. Substrate is bound by residues Y94 and 100 to 103 (GCDR). D102 acts as the Proton acceptor in catalysis. T124 serves as a coordination point for ATP. Residue T175 coordinates substrate.

The protein belongs to the type III pantothenate kinase family. As to quaternary structure, homodimer. It depends on NH4(+) as a cofactor. K(+) serves as cofactor.

The protein localises to the cytoplasm. It carries out the reaction (R)-pantothenate + ATP = (R)-4'-phosphopantothenate + ADP + H(+). It functions in the pathway cofactor biosynthesis; coenzyme A biosynthesis; CoA from (R)-pantothenate: step 1/5. Functionally, catalyzes the phosphorylation of pantothenate (Pan), the first step in CoA biosynthesis. The sequence is that of Type III pantothenate kinase from Psychrobacter arcticus (strain DSM 17307 / VKM B-2377 / 273-4).